We begin with the raw amino-acid sequence, 121 residues long: Large ribosomal subunit protein bL20 (121 aa).

This sequence belongs to the bacterial ribosomal protein bL20 family.

In terms of biological role, binds directly to 23S ribosomal RNA and is necessary for the in vitro assembly process of the 50S ribosomal subunit. It is not involved in the protein synthesizing functions of that subunit. This Orientia tsutsugamushi (strain Ikeda) (Rickettsia tsutsugamushi) protein is Large ribosomal subunit protein bL20.